We begin with the raw amino-acid sequence, 242 residues long: Placenta-expressed transcript 1 protein (242 aa).

The signal sequence occupies residues 1 to 26 (MAILRSLLLPLGLLLCLWLLCSPASC). Over 27–220 (TNSTTNCKPF…TTHKSSANRA (194 aa)) the chain is Extracellular. Residues asparagine 28, asparagine 81, and asparagine 106 are each glycosylated (N-linked (GlcNAc...) asparagine). The segment at 162–209 (VITTPTHKPTPAPPKPTTNPQKTTTNHSIPTTSLPKPTTSLYTSHPKL) is disordered. Residues 169–178 (KPTPAPPKPT) show a composition bias toward pro residues. The span at 179-205 (TNPQKTTTNHSIPTTSLPKPTTSLYTS) shows a compositional bias: low complexity. A helical membrane pass occupies residues 221 to 241 (FLCPVREAIQILFIFLIGTLL). Position 242 (phenylalanine 242) is a topological domain, cytoplasmic.

Post-translationally, N-glycosylated.

The protein resides in the membrane. The protein localises to the apical cell membrane. Modulates leading keratinocyte migration and cellular adhesion to matrix proteins during a wound-healing response and promotes wound repair. May play a role during trichilemmal differentiation of the hair follicle. The polypeptide is Placenta-expressed transcript 1 protein (PLET1) (Bos taurus (Bovine)).